The chain runs to 236 residues: LexA repressor (236 aa).

Residues 1 to 25 (MNDSNDTSVAGGAAGADSRVLSADS) form a disordered region. The H-T-H motif DNA-binding region spans 51-71 (IREIGDAVGLTSTSSVAHQLR). Active-site for autocatalytic cleavage activity residues include Ser-160 and Lys-197.

This sequence belongs to the peptidase S24 family. As to quaternary structure, homodimer.

The catalysed reaction is Hydrolysis of Ala-|-Gly bond in repressor LexA.. Represses a number of genes involved in the response to DNA damage (SOS response), including recA and lexA. In the presence of single-stranded DNA, RecA interacts with LexA causing an autocatalytic cleavage which disrupts the DNA-binding part of LexA, leading to derepression of the SOS regulon and eventually DNA repair. The sequence is that of LexA repressor from Mycobacterium tuberculosis (strain ATCC 25177 / H37Ra).